The primary structure comprises 354 residues: S-adenosylmethionine:tRNA ribosyltransferase-isomerase (354 aa).

Belongs to the QueA family. Monomer.

It is found in the cytoplasm. The catalysed reaction is 7-aminomethyl-7-carbaguanosine(34) in tRNA + S-adenosyl-L-methionine = epoxyqueuosine(34) in tRNA + adenine + L-methionine + 2 H(+). Its pathway is tRNA modification; tRNA-queuosine biosynthesis. Functionally, transfers and isomerizes the ribose moiety from AdoMet to the 7-aminomethyl group of 7-deazaguanine (preQ1-tRNA) to give epoxyqueuosine (oQ-tRNA). This is S-adenosylmethionine:tRNA ribosyltransferase-isomerase from Pseudomonas fluorescens (strain ATCC BAA-477 / NRRL B-23932 / Pf-5).